Here is a 112-residue protein sequence, read N- to C-terminus: Keratin-associated protein 12-4 (112 aa).

Repeat copies occupy residues 10–14 (CPMAC), 20–24 (CVPST), 25–29 (CYPPE), 35–39 (CCCSA), 41–45 (CVALL), 46–50 (CRPLC), 56–60 (CQPAC), 61–65 (CVPSP), 66–70 (CQVAC), 71–75 (CVPVS), 76–80 (CKPVL), 81–85 (CVASF), 86–90 (CPTSG), 91–95 (CCQPF), and 96–100 (CPTLV). The tract at residues 10–100 (CPMACPGSPC…CCQPFCPTLV (91 aa)) is 15 X 5 AA approximate repeats.

It belongs to the KRTAP type 12 family. In terms of assembly, interacts with hair keratins. Restricted to a narrow region of the hair fiber cuticle, lying approximately 20 cell layers above the apex of the dermal papilla of the hair root; not detected in any other tissues.

In the hair cortex, hair keratin intermediate filaments are embedded in an interfilamentous matrix, consisting of hair keratin-associated proteins (KRTAP), which are essential for the formation of a rigid and resistant hair shaft through their extensive disulfide bond cross-linking with abundant cysteine residues of hair keratins. The matrix proteins include the high-sulfur and high-glycine-tyrosine keratins. This chain is Keratin-associated protein 12-4 (KRTAP12-4), found in Homo sapiens (Human).